The sequence spans 513 residues: ATP synthase subunit alpha (513 aa).

169–176 is a binding site for ATP; that stretch reads GDRQIGKT.

This sequence belongs to the ATPase alpha/beta chains family. As to quaternary structure, F-type ATPases have 2 components, CF(1) - the catalytic core - and CF(0) - the membrane proton channel. CF(1) has five subunits: alpha(3), beta(3), gamma(1), delta(1), epsilon(1). CF(0) has three main subunits: a(1), b(2) and c(9-12). The alpha and beta chains form an alternating ring which encloses part of the gamma chain. CF(1) is attached to CF(0) by a central stalk formed by the gamma and epsilon chains, while a peripheral stalk is formed by the delta and b chains.

It is found in the cell inner membrane. The catalysed reaction is ATP + H2O + 4 H(+)(in) = ADP + phosphate + 5 H(+)(out). Produces ATP from ADP in the presence of a proton gradient across the membrane. The alpha chain is a regulatory subunit. The polypeptide is ATP synthase subunit alpha (Vibrio alginolyticus).